We begin with the raw amino-acid sequence, 396 residues long: Elongation factor Tu (396 aa).

The tr-type G domain maps to 10-206 (KPHVNVGTIG…ALDDYIPEPE (197 aa)). A G1 region spans residues 19–26 (GHVDHGKT). 19–26 (GHVDHGKT) provides a ligand contact to GTP. Thr26 is a binding site for Mg(2+). Positions 60–64 (GITIA) are G2. The segment at 81-84 (DCPG) is G3. GTP-binding positions include 81–85 (DCPGH) and 136–139 (NKAD). Positions 136–139 (NKAD) are G4. The tract at residues 174-176 (SAL) is G5.

Belongs to the TRAFAC class translation factor GTPase superfamily. Classic translation factor GTPase family. EF-Tu/EF-1A subfamily. In terms of assembly, monomer.

The protein localises to the cytoplasm. It catalyses the reaction GTP + H2O = GDP + phosphate + H(+). Functionally, GTP hydrolase that promotes the GTP-dependent binding of aminoacyl-tRNA to the A-site of ribosomes during protein biosynthesis. The protein is Elongation factor Tu of Methylococcus capsulatus (strain ATCC 33009 / NCIMB 11132 / Bath).